The sequence spans 214 residues: Large ribosomal subunit protein uL1 (214 aa).

Belongs to the universal ribosomal protein uL1 family. As to quaternary structure, component of the large ribosomal subunit.

The protein localises to the cytoplasm. Its function is as follows. Component of the large ribosomal subunit. The ribosome is a large ribonucleoprotein complex responsible for the synthesis of proteins in the cell. This chain is Large ribosomal subunit protein uL1 (RPL10A), found in Entamoeba histolytica (strain ATCC 30459 / HM-1:IMSS / ABRM).